Consider the following 447-residue polypeptide: Tol-Pal system protein TolB (447 aa).

Residues 1–34 form the signal peptide; that stretch reads MSSRLPALPLSRRQALLGGAGSAAALLLPGGAQA. The tract at residues 426-447 is disordered; the sequence is RNEQKVPTPGFASDPAWSPLLS.

Belongs to the TolB family. As to quaternary structure, the Tol-Pal system is composed of five core proteins: the inner membrane proteins TolA, TolQ and TolR, the periplasmic protein TolB and the outer membrane protein Pal. They form a network linking the inner and outer membranes and the peptidoglycan layer.

Its subcellular location is the periplasm. Part of the Tol-Pal system, which plays a role in outer membrane invagination during cell division and is important for maintaining outer membrane integrity. The sequence is that of Tol-Pal system protein TolB from Rhodopseudomonas palustris (strain BisB18).